The chain runs to 141 residues: Hemoglobin subunit alpha (141 aa).

The Globin domain occupies valine 1–arginine 141. A Phosphoserine modification is found at serine 3. 2 positions are modified to N6-succinyllysine: lysine 7 and lysine 11. The residue at position 16 (lysine 16) is an N6-acetyllysine; alternate. Lysine 16 is modified (N6-succinyllysine; alternate). Position 24 is a phosphotyrosine (tyrosine 24). Serine 35 bears the Phosphoserine mark. An N6-succinyllysine modification is found at lysine 40. Residue serine 49 is modified to Phosphoserine. Histidine 58 contacts O2. Residue histidine 87 participates in heme b binding. At serine 102 the chain carries Phosphoserine. Threonine 108 is modified (phosphothreonine). A Phosphoserine modification is found at serine 124. Phosphothreonine occurs at positions 134 and 137. Serine 138 is subject to Phosphoserine.

This sequence belongs to the globin family. In terms of assembly, heterotetramer of two alpha chains and two beta chains. Red blood cells.

Functionally, involved in oxygen transport from the lung to the various peripheral tissues. Hemopressin acts as an antagonist peptide of the cannabinoid receptor CNR1. Hemopressin-binding efficiently blocks cannabinoid receptor CNR1 and subsequent signaling. This Macropus giganteus (Eastern gray kangaroo) protein is Hemoglobin subunit alpha (HBA).